The sequence spans 269 residues: Phosphatidylglycerol--prolipoprotein diacylglyceryl transferase (269 aa).

3 helical membrane-spanning segments follow: residues 21–41 (WYGI…VLEG), 54–74 (LLLY…VVFE), and 88–108 (IWDG…VILI). R136 is an a 1,2-diacyl-sn-glycero-3-phospho-(1'-sn-glycerol) binding site. Helical transmembrane passes span 206 to 226 (GEVV…IEGM) and 236 to 256 (LRVS…AIFY).

This sequence belongs to the Lgt family.

Its subcellular location is the cell membrane. The catalysed reaction is L-cysteinyl-[prolipoprotein] + a 1,2-diacyl-sn-glycero-3-phospho-(1'-sn-glycerol) = an S-1,2-diacyl-sn-glyceryl-L-cysteinyl-[prolipoprotein] + sn-glycerol 1-phosphate + H(+). It functions in the pathway protein modification; lipoprotein biosynthesis (diacylglyceryl transfer). In terms of biological role, catalyzes the transfer of the diacylglyceryl group from phosphatidylglycerol to the sulfhydryl group of the N-terminal cysteine of a prolipoprotein, the first step in the formation of mature lipoproteins. This is Phosphatidylglycerol--prolipoprotein diacylglyceryl transferase from Ligilactobacillus salivarius (strain UCC118) (Lactobacillus salivarius).